The following is a 647-amino-acid chain: ATP-dependent zinc metalloprotease FtsH (647 aa).

Residues 1 to 33 form a disordered region; it reads MARKSDEDTNPMDKFMDRLRGSPGDGGPGRPDP. Residues 1-39 lie on the Cytoplasmic side of the membrane; sequence MARKSDEDTNPMDKFMDRLRGSPGDGGPGRPDPSQRKVH. A helical transmembrane segment spans residues 40-60; the sequence is FSIWYFILALLLIVWMQTYMG. The Periplasmic portion of the chain corresponds to 61-134; it reads EQQSEKISYS…RFSGDVQNPW (74 aa). A helical transmembrane segment spans residues 135–155; that stretch reads LGLITWWLLPFAIMIFFWSFL. The Cytoplasmic portion of the chain corresponds to 156 to 647; that stretch reads MRRMGGGPQG…DPVQVEGGAA (492 aa). 227-234 serves as a coordination point for ATP; it reads GAPGTGKT. His449 provides a ligand contact to Zn(2+). Glu450 is an active-site residue. Zn(2+) is bound by residues His453 and Asp526.

The protein in the central section; belongs to the AAA ATPase family. This sequence in the C-terminal section; belongs to the peptidase M41 family. As to quaternary structure, homohexamer. The cofactor is Zn(2+).

It localises to the cell inner membrane. Its function is as follows. Acts as a processive, ATP-dependent zinc metallopeptidase for both cytoplasmic and membrane proteins. Plays a role in the quality control of integral membrane proteins. In Syntrophobacter fumaroxidans (strain DSM 10017 / MPOB), this protein is ATP-dependent zinc metalloprotease FtsH.